The sequence spans 516 residues: Delta(24)-sterol reductase (516 aa).

A signal peptide spans 1-22 (MEPAVSLAVCALLFLLWVRVKG). Over 23-31 (LEFVLIHQR) the chain is Lumenal. A helical membrane pass occupies residues 32-52 (WVFVCLFLLPLSLIFDIYYYV). The Cytoplasmic portion of the chain corresponds to 53-516 (RAWVVFKLSS…YDKICKAARH (464 aa)). The 177-residue stretch at 58–234 (FKLSSAPRLH…VAAEIRIIPA (177 aa)) folds into the FAD-binding PCMH-type domain. 163–175 (TVGGLIMGTGIES) serves as a coordination point for FAD.

It belongs to the FAD-binding oxidoreductase/transferase type 4 family. In terms of assembly, interacts with DHCR7; this interaction regulates DHCR7 activity. It depends on FAD as a cofactor.

The protein localises to the endoplasmic reticulum membrane. It localises to the golgi apparatus membrane. It carries out the reaction cholesterol + NADP(+) = desmosterol + NADPH + H(+). The enzyme catalyses lanosterol + NADPH + H(+) = 24,25-dihydrolanosterol + NADP(+). It catalyses the reaction 5alpha-cholest-8-en-3beta-ol + NADP(+) = zymosterol + NADPH + H(+). It participates in steroid biosynthesis; cholesterol biosynthesis. In terms of biological role, catalyzes the reduction of the delta-24 double bond of sterol intermediates during cholesterol biosynthesis. In addition to its cholesterol-synthesizing activity, can protect cells from oxidative stress by reducing caspase 3 activity during apoptosis induced by oxidative stress. Also protects against amyloid-beta peptide-induced apoptosis. In Macaca fascicularis (Crab-eating macaque), this protein is Delta(24)-sterol reductase (DHCR24).